Consider the following 804-residue polypeptide: Probable replication endonuclease from prophage-like region 2 (804 aa).

Residues Tyr503 and Tyr507 each act as O-(5'-phospho-DNA)-tyrosine intermediate in the active site.

Belongs to the phage GPA family.

Functionally, possible endonuclease which induces a single-strand cut and initiates DNA replication. This chain is Probable replication endonuclease from prophage-like region 2, found in Salmonella typhi.